Reading from the N-terminus, the 463-residue chain is L-seryl-tRNA(Sec) selenium transferase (463 aa).

The residue at position 295 (lysine 295) is an N6-(pyridoxal phosphate)lysine.

The protein belongs to the SelA family. Homodecamer; pentamer of dimers. Binds only one seryl-tRNA(Sec) per dimer. It depends on pyridoxal 5'-phosphate as a cofactor.

It is found in the cytoplasm. It catalyses the reaction L-seryl-tRNA(Sec) + selenophosphate + H(+) = L-selenocysteinyl-tRNA(Sec) + phosphate. The protein operates within aminoacyl-tRNA biosynthesis; selenocysteinyl-tRNA(Sec) biosynthesis; selenocysteinyl-tRNA(Sec) from L-seryl-tRNA(Sec) (bacterial route): step 1/1. Its function is as follows. Converts seryl-tRNA(Sec) to selenocysteinyl-tRNA(Sec) required for selenoprotein biosynthesis. The protein is L-seryl-tRNA(Sec) selenium transferase of Escherichia coli O6:H1 (strain CFT073 / ATCC 700928 / UPEC).